The sequence spans 4923 residues: Bridge-like lipid transfer protein family member 1 (4923 aa).

A helical transmembrane segment spans residues 25–45 (FVWLLVATIMSCGWIIYLTYY). Disordered regions lie at residues 160–179 (NRDEEKGREQRDKSLESVHI), 606–631 (HSKSPPDNNMPAEGQGAPPKNSKPRW), 1203–1277 (SLHV…SARL), 1300–1334 (FSSEVSRSDENVLDSPRQRRSYGSFPFTPSADSST), 1357–1400 (TEEF…SVEG), 1471–1494 (TNKRTSKSSLHRPLDLDTPTSEES), 1630–1660 (SAAKQEHKISKTEGTTPGSLSTPHGQTDLSI), 1878–1948 (RDGV…PDSS), 2191–2235 (SKSH…LQCN), 2262–2281 (PHRANEQTATKSSSLTRTGN), 2355–2375 (NTLDTHSQHSHSQHSTSQEDL), 2550–2655 (RYTA…SEQS), 2885–2910 (IRQPSNTPPPNREDTPTPQPSEVSIN), 3564–3596 (YSNSRSKSISAAGRPPMKRSDRPREDLPDIKVE), 3645–3695 (FSPT…RKSA), 3739–3797 (LHPS…SLQS), 3848–3884 (GMRDAPTPAPAPAASGPGKTNTLLSPPPPPLPSAKGK), 4017–4071 (PTSA…TGPP), 4102–4124 (AVTGLPPGPGPLGSVEDEASSVT), 4249–4309 (DGQT…AAAQ), and 4797–4827 (RMFASRPGQKSPTTQQDEPSSDKKEEREKEE). A compositionally biased stretch (low complexity) spans 1210-1226 (SHSSASSSEENSSSSAA). Residues 1237-1248 (PSPSTELMNVTT) show a composition bias toward polar residues. Positions 1260–1271 (SPLRSPLKRQSS) are enriched in low complexity. Residues 1641–1658 (TEGTTPGSLSTPHGQTDL) are compositionally biased toward polar residues. The span at 1887–1898 (SSGSQTGSGYST) shows a compositional bias: low complexity. Residues 1907–1920 (NDAQSPASEPNNNS) are compositionally biased toward polar residues. Positions 1921–1931 (DSDEQDEGVES) are enriched in acidic residues. 2 stretches are compositionally biased toward polar residues: residues 2208-2218 (PYQSLSYTSGD) and 2267-2281 (EQTATKSSSLTRTGN). The span at 2550-2560 (RYTAGSSSPTP) shows a compositional bias: polar residues. A compositionally biased stretch (basic and acidic residues) spans 2606 to 2624 (TRSREPRGRGTLGRSERRT). Residues 3581–3595 (KRSDRPREDLPDIKV) are compositionally biased toward basic and acidic residues. A compositionally biased stretch (basic and acidic residues) spans 3746 to 3770 (TEHEDLALRRSCERSSRSLDQDSPP). The segment covering 4017–4039 (PTSATYPSEGQHTPSSTPPSVHN) has biased composition (polar residues). The segment covering 4044–4056 (PGGPSTGLGSPLG) has biased composition (low complexity). Composition is skewed to polar residues over residues 4249–4268 (DGQTTQHPSSSVFTDTTPSH), 4276–4286 (TGRTRSVSDSS), and 4804–4814 (GQKSPTTQQDE). Residues 4816–4827 (SSDKKEEREKEE) are compositionally biased toward basic and acidic residues.

The protein resides in the cell membrane. Its subcellular location is the endoplasmic reticulum membrane. It localises to the mitochondrion membrane. In terms of biological role, tube-forming lipid transport protein which provides phosphatidylethanolamine for glycosylphosphatidylinositol (GPI) anchor synthesis in the endoplasmic reticulum. Plays a role in endosomal trafficking and endosome recycling. Also involved in the actin cytoskeleton and cilia structural dynamics. Acts as a regulator of phagocytosis. The sequence is that of Bridge-like lipid transfer protein family member 1 (bltp1) from Danio rerio (Zebrafish).